A 344-amino-acid chain; its full sequence is Glycerol-3-phosphate dehydrogenase [NAD(P)+] 2 (344 aa).

NADPH contacts are provided by Ser12, Trp13, Arg33, Arg34, and Lys107. The sn-glycerol 3-phosphate site is built by Lys107, Gly138, and Ser140. Residue Ala142 participates in NADPH binding. Sn-glycerol 3-phosphate contacts are provided by Lys193, Asp246, Ser256, Arg257, and Asn258. The active-site Proton acceptor is the Lys193. Arg257 serves as a coordination point for NADPH. NADPH-binding residues include Val281 and Glu283.

Belongs to the NAD-dependent glycerol-3-phosphate dehydrogenase family.

The protein resides in the cytoplasm. The enzyme catalyses sn-glycerol 3-phosphate + NAD(+) = dihydroxyacetone phosphate + NADH + H(+). The catalysed reaction is sn-glycerol 3-phosphate + NADP(+) = dihydroxyacetone phosphate + NADPH + H(+). It functions in the pathway membrane lipid metabolism; glycerophospholipid metabolism. In terms of biological role, catalyzes the reduction of the glycolytic intermediate dihydroxyacetone phosphate (DHAP) to sn-glycerol 3-phosphate (G3P), the key precursor for phospholipid synthesis. The sequence is that of Glycerol-3-phosphate dehydrogenase [NAD(P)+] 2 from Salinibacter ruber (strain DSM 13855 / M31).